We begin with the raw amino-acid sequence, 97 residues long: Cornifin (97 aa).

Residues 1 to 42 are disordered; the sequence is MSSQQQKQPCTPPPQPQQQQVKQPCQPPPQEPCVPKTKEPCH. Ser2 is modified (N-acetylserine). 9 repeat units span residues 3–14, 18–29, 31–38, 39–46, 47–54, 55–62, 63–70, 71–78, and 79–85. The 2 X 12 AA approximate repeats stretch occupies residues 3-29; the sequence is SQQQKQPCTPPPQPQQQQVKQPCQPPP. The tract at residues 31–85 is 7 X 8 AA approximate tandem repeats; that stretch reads EPCVPKTKEPCHPKVPEPCQPKVPEPCQPKVPEPCHPKVPEPCQPKVPEPCPSPV.

The protein belongs to the cornifin (SPRR) family. Not detected in normal lung tissue but seen in tumor tissues. Cells around the keratin pearls contain high levels.

It is found in the cytoplasm. In terms of biological role, cross-linked envelope protein of keratinocytes. It is a keratinocyte protein that first appears in the cell cytosol, but ultimately becomes cross-linked to membrane proteins by transglutaminase. All that results in the formation of an insoluble envelope beneath the plasma membrane. This chain is Cornifin (SPRP), found in Sus scrofa (Pig).